We begin with the raw amino-acid sequence, 404 residues long: MKKIYDLWVRVSLIKKIGIGVVIGVMLGILAPDLTGFSILGKLFVGGLKAIAPLLVFALVSQAISHQKKGKQTNMTLIIVLYLFGTFASALVAVLTAYLFPLTLVLNTPVNTELSPPQGVAEVFQSLLLKLVDNPINALATANYIGVLSWAIIFGLALKAASQETKHLIKTAAEVTSQIVVWIINLAPIGIMSLVFTTISENGVGILSDYAFLILVLVGTMVFVALVVNPLIAVLITRQNPYPLVLRCLRESGLTAFFTRSSAANIPVNMQLCQKIGLSKDTYSVSIPLGATINMGGAAITINVLTLAAVHTFGIPIDFLTALLLSVVAAVSACGASGVAGGSLLLIPVACSLFGISNDLAMQVVGVGFIVGVIQDSCETALNSSTDVLFTAIAENAFWKRKKA.

8 consecutive transmembrane segments (helical) span residues 17–37, 39–59, 75–95, 138–158, 179–199, 212–232, 287–307, and 313–333; these read IGIG…LTGF, ILGK…VFAL, MTLI…VAVL, ALAT…GLAL, IVVW…FTTI, FLIL…NPLI, IPLG…VLTL, and FGIP…AVSA.

The protein belongs to the dicarboxylate/amino acid:cation symporter (DAACS) (TC 2.A.23) family.

It localises to the cell membrane. The enzyme catalyses L-serine(in) + Na(+)(in) = L-serine(out) + Na(+)(out). The catalysed reaction is L-threonine(in) + Na(+)(in) = L-threonine(out) + Na(+)(out). Functionally, involved in the import of serine and threonine into the cell, with the concomitant import of sodium (symport system). The chain is Serine/threonine transporter SstT from Streptococcus pyogenes serotype M12 (strain MGAS2096).